Reading from the N-terminus, the 176-residue chain is ATP-dependent protease subunit HslV (176 aa).

Residue threonine 6 is part of the active site. Na(+) contacts are provided by serine 161, cysteine 164, and threonine 167.

It belongs to the peptidase T1B family. HslV subfamily. As to quaternary structure, a double ring-shaped homohexamer of HslV is capped on each side by a ring-shaped HslU homohexamer. The assembly of the HslU/HslV complex is dependent on binding of ATP.

Its subcellular location is the cytoplasm. The enzyme catalyses ATP-dependent cleavage of peptide bonds with broad specificity.. Its activity is regulated as follows. Allosterically activated by HslU binding. In terms of biological role, protease subunit of a proteasome-like degradation complex believed to be a general protein degrading machinery. The protein is ATP-dependent protease subunit HslV of Pseudothermotoga lettingae (strain ATCC BAA-301 / DSM 14385 / NBRC 107922 / TMO) (Thermotoga lettingae).